The following is a 396-amino-acid chain: MSEFIAENRGADAITRPNWSAVFSVAFCVACLIIVEFLPVSLLTPMAQDLGISEGVAGQSVTVTAFVAMFASLFITQTIQATDRRYVVILFAVLLTLSCLLVSFANSFSLLLIGRACLGLALGGFWAMSASLTMRLVPPRTVPKALSVIFGAVSIALVIAAPLGSFLGELIGWRNVFNAAAVMGVLCIFWIIKSLPSLPGEPSHQKQNTFRLLQRPGVMAGMIAIFMSFAGQFAFFTYIRPVYMNLAGFGVDGLTLVLLSFGIASFIGTSLSSFILKRSVKLALAGAPLILAVSALVLTLWGSDKIVATGVAIIWGLTFALVPVGWSTWITRSLADQAEKAGSIQVAVIQLANTCGAAIGGYALDNIGLTSPLMLSGTLMLLTALLVTAKVKMKKS.

At 1–21 the chain is on the cytoplasmic side; that stretch reads MSEFIAENRGADAITRPNWSA. The chain crosses the membrane as a helical span at residues 22–42; sequence VFSVAFCVACLIIVEFLPVSL. Over 43-54 the chain is Periplasmic; sequence LTPMAQDLGISE. A helical membrane pass occupies residues 55–75; it reads GVAGQSVTVTAFVAMFASLFI. The Cytoplasmic portion of the chain corresponds to 76–85; it reads TQTIQATDRR. A helical membrane pass occupies residues 86 to 106; it reads YVVILFAVLLTLSCLLVSFAN. Position 107 (Ser-107) is a topological domain, periplasmic. Residues 108-128 form a helical membrane-spanning segment; the sequence is FSLLLIGRACLGLALGGFWAM. At 129-147 the chain is on the cytoplasmic side; sequence SASLTMRLVPPRTVPKALS. The chain crosses the membrane as a helical span at residues 148 to 168; that stretch reads VIFGAVSIALVIAAPLGSFLG. The Periplasmic portion of the chain corresponds to 169-175; sequence ELIGWRN. The helical transmembrane segment at 176–196 threads the bilayer; that stretch reads VFNAAAVMGVLCIFWIIKSLP. At 197 to 215 the chain is on the cytoplasmic side; the sequence is SLPGEPSHQKQNTFRLLQR. The chain crosses the membrane as a helical span at residues 216-236; sequence PGVMAGMIAIFMSFAGQFAFF. At 237-255 the chain is on the periplasmic side; the sequence is TYIRPVYMNLAGFGVDGLT. Residues 256–276 traverse the membrane as a helical segment; it reads LVLLSFGIASFIGTSLSSFIL. At 277-281 the chain is on the cytoplasmic side; sequence KRSVK. Residues 282–302 form a helical membrane-spanning segment; the sequence is LALAGAPLILAVSALVLTLWG. The Periplasmic segment spans residues 303-305; the sequence is SDK. The helical transmembrane segment at 306–326 threads the bilayer; that stretch reads IVATGVAIIWGLTFALVPVGW. Residues 327–343 lie on the Cytoplasmic side of the membrane; the sequence is STWITRSLADQAEKAGS. A helical membrane pass occupies residues 344-364; the sequence is IQVAVIQLANTCGAAIGGYAL. Residues 365 to 366 lie on the Periplasmic side of the membrane; that stretch reads DN. Residues 367 to 387 form a helical membrane-spanning segment; that stretch reads IGLTSPLMLSGTLMLLTALLV. Over 388 to 396 the chain is Cytoplasmic; it reads TAKVKMKKS.

This sequence belongs to the major facilitator superfamily. DHA1 family. NepI (TC 2.A.1.2.26) subfamily.

It is found in the cell inner membrane. The catalysed reaction is inosine(in) + H(+)(out) = inosine(out) + H(+)(in). It catalyses the reaction guanosine(in) + H(+)(out) = guanosine(out) + H(+)(in). In terms of biological role, involved in the efflux of purine ribonucleosides, such as inosine and guanosine. In Shigella flexneri, this protein is Purine ribonucleoside efflux pump NepI.